We begin with the raw amino-acid sequence, 306 residues long: Large ribosomal subunit protein uL2m (306 aa).

The N-terminal 60 residues, M1–S60, are a transit peptide targeting the mitochondrion.

It belongs to the universal ribosomal protein uL2 family. Component of the mitochondrial ribosome large subunit (39S) which comprises a 16S rRNA and about 50 distinct proteins.

It is found in the mitochondrion. In Bos taurus (Bovine), this protein is Large ribosomal subunit protein uL2m (MRPL2).